Reading from the N-terminus, the 241-residue chain is Large ribosomal subunit protein uL3 (241 aa).

Disordered regions lie at residues 139–166 (VSHRSIGSTGGRQDPGKTFKNKKMPGHM) and 214–241 (ADAPKPGKFRLANGDAAAEAPAAEQEGA). Gln151 carries the N5-methylglutamine modification. Low complexity predominate over residues 229–241 (AAAEAPAAEQEGA).

In terms of assembly, part of the 50S ribosomal subunit. Forms a cluster with proteins L14 and L19. Post-translationally, methylated, on either Lys-155 or Lys-158. In terms of processing, methylated by PrmB.

Its function is as follows. One of the primary rRNA binding proteins, it binds directly near the 3'-end of the 23S rRNA, where it nucleates assembly of the 50S subunit. In Rhodopseudomonas palustris (strain ATCC BAA-98 / CGA009), this protein is Large ribosomal subunit protein uL3.